Reading from the N-terminus, the 196-residue chain is Blue copper protein (196 aa).

The first 22 residues, 1–22, serve as a signal peptide directing secretion; that stretch reads MAGVFKTVTFLVLVFAAVVVFA. Residues 23–125 enclose the Phytocyanin domain; the sequence is EDYDVGDDTE…GQKLSITVVA (103 aa). A Cu cation-binding site is contributed by histidine 66. Cysteine 79 and cysteine 113 form a disulfide bridge. Asparagine 98 carries an N-linked (GlcNAc...) asparagine glycan. Residues cysteine 107, histidine 112, and glutamine 117 each contribute to the Cu cation site. Residues 133 to 173 form a disordered region; it reads TPGAGATPAPGSTPSTGGTTPPTAGGTTTPSGSSGTTTPAG. Residues 135–173 show a composition bias toward low complexity; sequence GAGATPAPGSTPSTGGTTPPTAGGTTTPSGSSGTTTPAG. Asparagine 174 carries the GPI-anchor amidated asparagine lipid modification. The propeptide at 175–196 is removed in mature form; the sequence is AASSLGGATFLVAFVSAVVALF.

Its subcellular location is the cell membrane. Functionally, probably acts as an electron carrier. The polypeptide is Blue copper protein (BCB) (Arabidopsis thaliana (Mouse-ear cress)).